Consider the following 158-residue polypeptide: Transcription elongation factor GreA (158 aa).

The span at 24–43 (DVERPKASEAIGEARDKGDL) shows a compositional bias: basic and acidic residues. Residues 24–47 (DVERPKASEAIGEARDKGDLSENA) form a disordered region. Residues 48–68 (EYDAAKEAQGLLEMKISKMEE) are a coiled coil.

This sequence belongs to the GreA/GreB family.

Its function is as follows. Necessary for efficient RNA polymerase transcription elongation past template-encoded arresting sites. The arresting sites in DNA have the property of trapping a certain fraction of elongating RNA polymerases that pass through, resulting in locked ternary complexes. Cleavage of the nascent transcript by cleavage factors such as GreA or GreB allows the resumption of elongation from the new 3'terminus. GreA releases sequences of 2 to 3 nucleotides. This Christiangramia forsetii (strain DSM 17595 / CGMCC 1.15422 / KT0803) (Gramella forsetii) protein is Transcription elongation factor GreA.